The chain runs to 426 residues: Enolase (426 aa).

(2R)-2-phosphoglycerate is bound at residue glutamine 165. Glutamate 209 serves as the catalytic Proton donor. 3 residues coordinate Mg(2+): aspartate 244, glutamate 287, and aspartate 313. Lysine 338, arginine 367, serine 368, and lysine 389 together coordinate (2R)-2-phosphoglycerate. The Proton acceptor role is filled by lysine 338.

It belongs to the enolase family. Requires Mg(2+) as cofactor.

It localises to the cytoplasm. It is found in the secreted. Its subcellular location is the cell surface. It carries out the reaction (2R)-2-phosphoglycerate = phosphoenolpyruvate + H2O. Its pathway is carbohydrate degradation; glycolysis; pyruvate from D-glyceraldehyde 3-phosphate: step 4/5. In terms of biological role, catalyzes the reversible conversion of 2-phosphoglycerate (2-PG) into phosphoenolpyruvate (PEP). It is essential for the degradation of carbohydrates via glycolysis. This is Enolase from Methanococcus maripaludis (strain DSM 14266 / JCM 13030 / NBRC 101832 / S2 / LL).